The primary structure comprises 103 residues: Small ribosomal subunit protein uS10 (103 aa).

The protein belongs to the universal ribosomal protein uS10 family. In terms of assembly, part of the 30S ribosomal subunit.

In terms of biological role, involved in the binding of tRNA to the ribosomes. The chain is Small ribosomal subunit protein uS10 from Chlorobium chlorochromatii (strain CaD3).